A 364-amino-acid chain; its full sequence is Probable protein disulfide-isomerase A6 (364 aa).

Residues 1–28 (MKMEMHQIWSRIALASFAFAILFVSVSA) form the signal peptide. Thioredoxin domains lie at 29 to 137 (DDVV…TEGG) and 139 to 256 (NVKI…EKSG). Residues Cys58, Cys61, Cys177, and Cys180 each act as nucleophile in the active site. Intrachain disulfides connect Cys58-Cys61 and Cys177-Cys180.

This sequence belongs to the protein disulfide isomerase family.

Its subcellular location is the endoplasmic reticulum lumen. The enzyme catalyses Catalyzes the rearrangement of -S-S- bonds in proteins.. The chain is Probable protein disulfide-isomerase A6 from Medicago sativa (Alfalfa).